The following is a 362-amino-acid chain: Probable protein phosphatase 2C 24 (362 aa).

A PPM-type phosphatase domain is found at 77–360; sequence RYGVSSVCGR…DNVSVVVIDL (284 aa). Mn(2+) contacts are provided by aspartate 117, glycine 118, aspartate 295, and aspartate 351.

The protein belongs to the PP2C family. Mg(2+) is required as a cofactor. It depends on Mn(2+) as a cofactor.

The catalysed reaction is O-phospho-L-seryl-[protein] + H2O = L-seryl-[protein] + phosphate. It catalyses the reaction O-phospho-L-threonyl-[protein] + H2O = L-threonyl-[protein] + phosphate. The protein is Probable protein phosphatase 2C 24 of Arabidopsis thaliana (Mouse-ear cress).